A 310-amino-acid chain; its full sequence is Ornithine carbamoyltransferase (310 aa).

Residues 57 to 60 (STRT), Q84, R108, and 135 to 138 (HPCQ) each bind carbamoyl phosphate. L-ornithine contacts are provided by residues N166, D229, and 233–234 (SM). Residues 269 to 270 (CL) and R297 contribute to the carbamoyl phosphate site.

The protein belongs to the aspartate/ornithine carbamoyltransferase superfamily. OTCase family.

Its subcellular location is the cytoplasm. The enzyme catalyses carbamoyl phosphate + L-ornithine = L-citrulline + phosphate + H(+). The protein operates within amino-acid biosynthesis; L-arginine biosynthesis; L-arginine from L-ornithine and carbamoyl phosphate: step 1/3. Its function is as follows. Reversibly catalyzes the transfer of the carbamoyl group from carbamoyl phosphate (CP) to the N(epsilon) atom of ornithine (ORN) to produce L-citrulline. The chain is Ornithine carbamoyltransferase from Thermosynechococcus vestitus (strain NIES-2133 / IAM M-273 / BP-1).